Here is a 91-residue protein sequence, read N- to C-terminus: Large ribosomal subunit protein uL23c (91 aa).

The protein belongs to the universal ribosomal protein uL23 family. Part of the 50S ribosomal subunit.

Its subcellular location is the plastid. It localises to the chloroplast. Functionally, binds to 23S rRNA. The chain is Large ribosomal subunit protein uL23c (rpl23) from Picea abies (Norway spruce).